Here is a 261-residue protein sequence, read N- to C-terminus: NAD(P)H-quinone oxidoreductase subunit K, chloroplastic (261 aa).

Positions 64, 65, 129, and 160 each coordinate [4Fe-4S] cluster.

The protein belongs to the complex I 20 kDa subunit family. In terms of assembly, NDH is composed of at least 16 different subunits, 5 of which are encoded in the nucleus. [4Fe-4S] cluster is required as a cofactor.

It is found in the plastid. The protein localises to the chloroplast thylakoid membrane. The catalysed reaction is a plastoquinone + NADH + (n+1) H(+)(in) = a plastoquinol + NAD(+) + n H(+)(out). It catalyses the reaction a plastoquinone + NADPH + (n+1) H(+)(in) = a plastoquinol + NADP(+) + n H(+)(out). In terms of biological role, NDH shuttles electrons from NAD(P)H:plastoquinone, via FMN and iron-sulfur (Fe-S) centers, to quinones in the photosynthetic chain and possibly in a chloroplast respiratory chain. The immediate electron acceptor for the enzyme in this species is believed to be plastoquinone. Couples the redox reaction to proton translocation, and thus conserves the redox energy in a proton gradient. This Physcomitrium patens (Spreading-leaved earth moss) protein is NAD(P)H-quinone oxidoreductase subunit K, chloroplastic.